The following is a 387-amino-acid chain: S-adenosylmethionine synthase (387 aa).

His15 is an ATP binding site. Residue Asp17 participates in Mg(2+) binding. A K(+)-binding site is contributed by Glu43. L-methionine is bound by residues Glu56 and Gln99. Residues 99–109 (QSPDIALGVNR) form a flexible loop region. Residues 166–168 (DAK), 232–233 (RF), Asp241, 247–248 (RK), Ala264, and Lys268 contribute to the ATP site. Asp241 is a binding site for L-methionine. Lys272 is a binding site for L-methionine.

The protein belongs to the AdoMet synthase family. Homotetramer; dimer of dimers. Mg(2+) is required as a cofactor. Requires K(+) as cofactor.

The protein resides in the cytoplasm. It catalyses the reaction L-methionine + ATP + H2O = S-adenosyl-L-methionine + phosphate + diphosphate. It participates in amino-acid biosynthesis; S-adenosyl-L-methionine biosynthesis; S-adenosyl-L-methionine from L-methionine: step 1/1. In terms of biological role, catalyzes the formation of S-adenosylmethionine (AdoMet) from methionine and ATP. The overall synthetic reaction is composed of two sequential steps, AdoMet formation and the subsequent tripolyphosphate hydrolysis which occurs prior to release of AdoMet from the enzyme. The sequence is that of S-adenosylmethionine synthase from Nitrosomonas eutropha (strain DSM 101675 / C91 / Nm57).